A 413-amino-acid chain; its full sequence is Zona pellucida-like domain-containing protein 1 (413 aa).

A signal peptide spans 1 to 19 (MEQICLIILLISKALSVGA). Q20 carries the post-translational modification Pyrrolidone carboxylic acid. Residues 20–370 (QFNGYNCDAN…PVFRMNTVTS (351 aa)) lie on the Extracellular side of the membrane. Residues 43-320 (YCGVQTITLK…PICGSRKKRD (278 aa)) form the ZP domain. Intrachain disulfides connect C44–C155 and C79–C104. N-linked (GlcNAc...) asparagine glycans are attached at residues N85, N121, N129, N164, N181, and N194. 2 cysteine pairs are disulfide-bonded: C235-C296 and C255-C313. N-linked (GlcNAc...) asparagine glycosylation occurs at N351. The helical transmembrane segment at 371 to 391 (ALISGIIILGVMSLCFFILSL) threads the bilayer. Residues 392 to 413 (TLLKGKRAPPTILSGARNPAFN) lie on the Cytoplasmic side of the membrane.

Post-translationally, proteolytically cleaved before the transmembrane segment to yield the secreted form found in the extracellular matrix of the cupula. In terms of processing, N-glycosylated. In terms of tissue distribution, detected in the acellular cupulae of the vestibular organ, and also in support cells adjacent to the cupula (at protein level).

It is found in the cytoplasmic vesicle membrane. The protein localises to the secreted. It localises to the extracellular space. The protein resides in the extracellular matrix. Its function is as follows. Glycoprotein which is a component of the gelatinous extracellular matrix in the cupulae of the vestibular organ. The chain is Zona pellucida-like domain-containing protein 1 from Salmo salar (Atlantic salmon).